A 537-amino-acid polypeptide reads, in one-letter code: Ataxin-10 homolog (537 aa).

This sequence belongs to the ataxin-10 family.

The protein localises to the cytoplasm. In terms of biological role, may play a role in the regulation of cytokinesis. This chain is Ataxin-10 homolog (CTR86), found in Kluyveromyces lactis (strain ATCC 8585 / CBS 2359 / DSM 70799 / NBRC 1267 / NRRL Y-1140 / WM37) (Yeast).